The sequence spans 107 residues: UPF0145 protein Memar_1285 (107 aa).

The protein belongs to the UPF0145 family.

The sequence is that of UPF0145 protein Memar_1285 from Methanoculleus marisnigri (strain ATCC 35101 / DSM 1498 / JR1).